Consider the following 313-residue polypeptide: MKILLANPRGFCAGVDRAISIVERALEMYQPPIYVRHEVVHNRFVVEGLKQRGAIFVEELSEVPDDNIVIFSAHGVSQAVRNEAKERQLTVFDATCPLVTKVHMEVARASRRSVEVVLIGHAGHPEVEGTMGQYASEDGGMYLVEKPEDVEKLQVKDPSNLHYVSQTTLSVDETADVIDQLRKVFPEIQGPRKDDICYATQNRQDAVREMAESVDVMIVVGSKNSSNSNRLRELSEKLGTPGFLTDCPEDVQPVWFEGKTKVGVTAGASAPEDLVNQIISRIQALIGGDVEELSGREENMFFEVPRELQVKNI.

Cys-12 contacts [4Fe-4S] cluster. 2 residues coordinate (2E)-4-hydroxy-3-methylbut-2-enyl diphosphate: His-41 and His-74. Residues His-41 and His-74 each coordinate dimethylallyl diphosphate. Residues His-41 and His-74 each contribute to the isopentenyl diphosphate site. Cys-96 is a [4Fe-4S] cluster binding site. (2E)-4-hydroxy-3-methylbut-2-enyl diphosphate is bound at residue His-124. His-124 provides a ligand contact to dimethylallyl diphosphate. His-124 is a binding site for isopentenyl diphosphate. Glu-126 functions as the Proton donor in the catalytic mechanism. Thr-167 provides a ligand contact to (2E)-4-hydroxy-3-methylbut-2-enyl diphosphate. Cys-197 contacts [4Fe-4S] cluster. Ser-225, Ser-226, Asn-227, and Ser-269 together coordinate (2E)-4-hydroxy-3-methylbut-2-enyl diphosphate. Residues Ser-225, Ser-226, Asn-227, and Ser-269 each contribute to the dimethylallyl diphosphate site. Ser-225, Ser-226, Asn-227, and Ser-269 together coordinate isopentenyl diphosphate.

Belongs to the IspH family. [4Fe-4S] cluster serves as cofactor.

The enzyme catalyses isopentenyl diphosphate + 2 oxidized [2Fe-2S]-[ferredoxin] + H2O = (2E)-4-hydroxy-3-methylbut-2-enyl diphosphate + 2 reduced [2Fe-2S]-[ferredoxin] + 2 H(+). The catalysed reaction is dimethylallyl diphosphate + 2 oxidized [2Fe-2S]-[ferredoxin] + H2O = (2E)-4-hydroxy-3-methylbut-2-enyl diphosphate + 2 reduced [2Fe-2S]-[ferredoxin] + 2 H(+). Its pathway is isoprenoid biosynthesis; dimethylallyl diphosphate biosynthesis; dimethylallyl diphosphate from (2E)-4-hydroxy-3-methylbutenyl diphosphate: step 1/1. It functions in the pathway isoprenoid biosynthesis; isopentenyl diphosphate biosynthesis via DXP pathway; isopentenyl diphosphate from 1-deoxy-D-xylulose 5-phosphate: step 6/6. Its function is as follows. Catalyzes the conversion of 1-hydroxy-2-methyl-2-(E)-butenyl 4-diphosphate (HMBPP) into a mixture of isopentenyl diphosphate (IPP) and dimethylallyl diphosphate (DMAPP). Acts in the terminal step of the DOXP/MEP pathway for isoprenoid precursor biosynthesis. The protein is 4-hydroxy-3-methylbut-2-enyl diphosphate reductase of Photobacterium profundum (strain SS9).